The sequence spans 320 residues: o-succinylbenzoate synthase (320 aa).

Catalysis depends on K133, which acts as the Proton donor. Residues D161, E190, and D213 each coordinate Mg(2+). Catalysis depends on K235, which acts as the Proton acceptor.

Belongs to the mandelate racemase/muconate lactonizing enzyme family. MenC type 1 subfamily. A divalent metal cation is required as a cofactor.

It carries out the reaction (1R,6R)-6-hydroxy-2-succinyl-cyclohexa-2,4-diene-1-carboxylate = 2-succinylbenzoate + H2O. The protein operates within quinol/quinone metabolism; 1,4-dihydroxy-2-naphthoate biosynthesis; 1,4-dihydroxy-2-naphthoate from chorismate: step 4/7. It participates in quinol/quinone metabolism; menaquinone biosynthesis. Functionally, converts 2-succinyl-6-hydroxy-2,4-cyclohexadiene-1-carboxylate (SHCHC) to 2-succinylbenzoate (OSB). The chain is o-succinylbenzoate synthase from Shigella sonnei (strain Ss046).